The primary structure comprises 169 residues: Protein ORFb in retron Ec67 (169 aa).

The chain is Protein ORFb in retron Ec67 from Escherichia coli.